We begin with the raw amino-acid sequence, 821 residues long: Palmitoyltransferase AKR1 (821 aa).

The interval 1 to 118 is disordered; the sequence is MVDKDANNEL…KDTASRKSMD (118 aa). The Cytoplasmic portion of the chain corresponds to 1–400; that stretch reads MVDKDANNEL…TIYLNPKIGK (400 aa). The span at 93 to 117 shows a compositional bias: basic and acidic residues; that stretch reads IQDESVNDKTSEPDENKDTASRKSM. ANK repeat units lie at residues 142–172, 176–205, 213–243, 247–277, 289–318, and 322–351; these read PSLH…KAND, DGIT…SKAD, LKAS…DPTL, QSYN…STST, CDRT…DVSK, and NLFI…NIFA. The chain crosses the membrane as a helical span at residues 401-421; it reads LVTFFTPYIILPIMFQVCSFY. A topological domain (lumenal) is located at residue Asn-422. The chain crosses the membrane as a helical span at residues 423–443; it reads GFVIPKLFFSVVLFAGSIYIL. The Cytoplasmic segment spans residues 444-463; it reads QKLVIPTYLAEEKAIPKSPL. The helical transmembrane segment at 464–484 threads the bilayer; the sequence is LAGIFSGTAFWCIVTWAFNII. Topologically, residues 485–494 are lumenal; the sequence is PTLLFKKFIS. A helical transmembrane segment spans residues 495–515; it reads NLVLSAFIYLFVWSFFKAMFI. Residues 516-589 lie on the Cytoplasmic side of the membrane; the sequence is NPGYVPVPSD…YNDIGVRNHK (74 aa). One can recognise a DHHC domain in the interval 546–596; sequence NFCVNTFVRKPLRSKYSRFNKKLIARFDHYCPWVYNDIGVRNHKLFVVFVY. Catalysis depends on Cys-576, which acts as the S-palmitoyl cysteine intermediate. The chain crosses the membrane as a helical span at residues 590-610; the sequence is LFVVFVYSLNLAVLLFTHLSI. Over 611–650 the chain is Lumenal; it reads KLFKNTEKMSGYDSDDESQKCWLLSDELCVGYKSHHFQFN. A helical membrane pass occupies residues 651 to 671; it reads LMLWCLIQYIWIAFLCLVQTF. Residues 672–821 are Cytoplasmic-facing; the sequence is QILKGLTTWE…YPPKLADVDA (150 aa).

The protein belongs to the DHHC palmitoyltransferase family. AKR/ZDHHC17 subfamily.

Its subcellular location is the early endosome membrane. It is found in the golgi apparatus membrane. It catalyses the reaction L-cysteinyl-[protein] + hexadecanoyl-CoA = S-hexadecanoyl-L-cysteinyl-[protein] + CoA. In terms of biological role, palmitoyltransferase specific for casein kinase 1. This is Palmitoyltransferase AKR1 (AKR1) from Debaryomyces hansenii (strain ATCC 36239 / CBS 767 / BCRC 21394 / JCM 1990 / NBRC 0083 / IGC 2968) (Yeast).